The primary structure comprises 426 residues: Cell cycle checkpoint control protein RAD9B (426 aa).

Serine 359 carries the phosphoserine modification.

Belongs to the rad9 family. As to quaternary structure, interacts with HUS1, HUS1B, RAD1, RAD9A and RAD17. In terms of tissue distribution, expressed in testis and skeletal muscle.

In Homo sapiens (Human), this protein is Cell cycle checkpoint control protein RAD9B (RAD9B).